Consider the following 269-residue polypeptide: Expansin-B9 (269 aa).

A signal peptide spans 1–24; it reads MGSLANNIMVVGAVLAALVVGGSC. An N-linked (GlcNAc...) asparagine glycan is attached at Asn-34. An Expansin-like EG45 domain is found at 63 to 169; sequence GGACGIKNVN…RRVRCKYPAG (107 aa). 3 disulfide bridges follow: Cys-66/Cys-94, Cys-97/Cys-164, and Cys-102/Cys-108. Residues 183–264 enclose the Expansin-like CBD domain; sequence NYVAVLVKFV…NWRPDAVYTS (82 aa).

It belongs to the expansin family. Expansin B subfamily. In terms of tissue distribution, expressed in anthers and pollen.

Its subcellular location is the secreted. The protein localises to the cell wall. It localises to the membrane. In terms of biological role, may aid fertilization by loosening the cell wall of the stigma and style, thereby facilitating penetration of the pollen tube. Acts selectively on grass cell walls, which are relatively poor in pectins and xyloglucans and rich in glucuronoarabinoxylans and (1-3),(1-4)-beta-D-glucans, when compared with cell walls of other angiosperms, including other monocots. The sequence is that of Expansin-B9 (EXPB9) from Zea mays (Maize).